The chain runs to 192 residues: Ribosomal RNA small subunit methyltransferase G (192 aa).

Residues glycine 63, leucine 68, 112-113, and arginine 125 contribute to the S-adenosyl-L-methionine site; that span reads IE.

The protein belongs to the methyltransferase superfamily. RNA methyltransferase RsmG family.

The protein resides in the cytoplasm. The enzyme catalyses guanosine(527) in 16S rRNA + S-adenosyl-L-methionine = N(7)-methylguanosine(527) in 16S rRNA + S-adenosyl-L-homocysteine. Functionally, specifically methylates the N7 position of guanine in position 527 of 16S rRNA. In Rickettsia africae (strain ESF-5), this protein is Ribosomal RNA small subunit methyltransferase G.